The following is a 262-amino-acid chain: Endoplasmic reticulum chaperone BiP (262 aa).

8–11 (GSTR) serves as a coordination point for ATP. Residues 53–63 (QDTGDLVLLDV) are interdomain linker. Residues 64–144 (CPLTLGIETV…PRGVPQIEVT (81 aa)) are substrate-binding (SBD). Residue K91 is modified to N6-succinyllysine. Omega-N-methylarginine is present on R136. T162 is subject to O-AMP-threonine; alternate. T162 is modified (phosphothreonine; alternate). K229 is subject to N6,N6,N6-trimethyllysine; by METTL21A; in vitro. K229 bears the N6,N6-dimethyllysine; alternate mark. K229 carries the N6-methyllysine; alternate modification. N6-methyllysine is present on K235.

This sequence belongs to the heat shock protein 70 family. In terms of assembly, monomer and homooligomer; homooligomerization via the interdomain linker inactivates the chaperone activity and acts as a storage of HSPA5/BiP molecules. Interacts with DNAJC1 (via J domain). Component of an EIF2 complex at least composed of CELF1/CUGBP1, CALR, CALR3, EIF2S1, EIF2S2, HSP90B1 and HSPA5. Part of a large chaperone multiprotein complex comprising DNAJB11, HSP90B1, HSPA5, HYOU, PDIA2, PDIA4, PDIA6, PPIB, SDF2L1, UGGT1 and very small amounts of ERP29, but not, or at very low levels, CALR nor CANX. Interacts with TMEM132A and TRIM21. May form a complex with ERLEC1, OS9, SEL1L and SYVN1. Interacts with DNAJC10. Interacts with DNAJB9/ERdj4; leading to recruit HSPA5/BiP to ERN1/IRE1. Interacts with ERN1/IRE1 (via luminal domain); the interaction takes place following interaction with DNAJB9/ERdj4 and leads to inactivate ERN1/IRE1, the interaction also competitively inhibits ERN1 interaction with MANF. Interacts directly with MANF (via SAP domain); the interaction inhibits ATP binding to HSPA5/BiP and subsequent nucleotide exchange. Interacts with EIF2AK3/PERK (via luminal domain); interaction leads to inactivate EIF2AK3/PERK. Interacts with MX1. Interacts with METTL23. Interacts with CEMIP; the interaction induces calcium leakage from the endoplasmic reticulum and cell migration. Interacts with PCSK4 form; the interaction takes place in the endoplasmic reticulum. Interacts with CIPC. Interacts with CCDC88B (via C-terminus); the interaction opposes ERN1-mediated JNK activation, protecting against apoptosis. Interacts with INPP5K; necessary for INPP5K localization at the endoplasmic reticulum. Interacts with MANF; the interaction is direct. Interacts with LOXL2; leading to activate the ERN1/IRE1-XBP1 pathway of the unfolded protein response. Interacts with CLU under stressed condition; interaction increases CLU protein stability; facilitates its retrotranslocation and redistribution to the mitochondria; cooperatively suppress stress-induced apoptosis by stabilizing mitochondrial membrane integrity. Interacts with CCDC47. Interacts with CLN3. Interacts with ELAPOR1; may regulate the function of HSPA5 in apoptosis and cell proliferation. Interacts with CASP7. Interacts with ILDR2; the interaction stabilizes ILDR2 expression. Interacts with ADAM7. In terms of processing, in unstressed cells, AMPylation at Thr-162 by FICD inactivates the chaperome activity: AMPylated form is locked in a relatively inert state and only weakly stimulated by J domain-containing proteins. In response to endoplasmic reticulum stress, de-AMPylation by the same protein, FICD, restores the chaperone activity.

The protein resides in the endoplasmic reticulum lumen. It is found in the melanosome. It localises to the cytoplasm. The protein localises to the cell surface. It catalyses the reaction ATP + H2O = ADP + phosphate + H(+). Its activity is regulated as follows. The chaperone activity is regulated by ATP-induced allosteric coupling of the nucleotide-binding (NBD) and substrate-binding (SBD) domains. In the ADP-bound and nucleotide-free (apo) states, the two domains have little interaction. In contrast, in the ATP-bound state the two domains are tightly coupled, which results in drastically accelerated kinetics in both binding and release of polypeptide substrates. J domain-containing co-chaperones (DNAJB9/ERdj4 or DNAJC10/ERdj5) stimulate the ATPase activity and are required for efficient substrate recognition by HSPA5/BiP. Homooligomerization inactivates participating HSPA5/BiP protomers and probably act as reservoirs to store HSPA5/BiP molecules when they are not needed by the cell. In terms of biological role, endoplasmic reticulum chaperone that plays a key role in protein folding and quality control in the endoplasmic reticulum lumen. Involved in the correct folding of proteins and degradation of misfolded proteins via its interaction with DNAJC10/ERdj5, probably to facilitate the release of DNAJC10/ERdj5 from its substrate. Acts as a key repressor of the EIF2AK3/PERK and ERN1/IRE1-mediated unfolded protein response (UPR). In the unstressed endoplasmic reticulum, recruited by DNAJB9/ERdj4 to the luminal region of ERN1/IRE1, leading to disrupt the dimerization of ERN1/IRE1, thereby inactivating ERN1/IRE1. Also binds and inactivates EIF2AK3/PERK in unstressed cells. Accumulation of misfolded protein in the endoplasmic reticulum causes release of HSPA5/BiP from ERN1/IRE1 and EIF2AK3/PERK, allowing their homodimerization and subsequent activation. Plays an auxiliary role in post-translational transport of small presecretory proteins across endoplasmic reticulum (ER). May function as an allosteric modulator for SEC61 channel-forming translocon complex, likely cooperating with SEC62 to enable the productive insertion of these precursors into SEC61 channel. Appears to specifically regulate translocation of precursors having inhibitory residues in their mature region that weaken channel gating. May also play a role in apoptosis and cell proliferation. This Sus scrofa (Pig) protein is Endoplasmic reticulum chaperone BiP.